Reading from the N-terminus, the 874-residue chain is MKTTAEIRQAFLDFFHSKGHQIVDSSSLVPENDPTLLFTNAGMNQFKDVFLGLDTRSYTRATTAQRCVRAGGKHNDLENVGYTARHHTFFEMLGNFSFGDYFKQDAIKFAWEFLTSPEWLGLPEEKLYVTVYETDDEAYGIWHKGVGVPENHIIRIGDNKGAPYASDNFWAMGDTGPCGPCTEIFYDHGEHVWGGLPGSEEEDGDRYIEVWNIVFMQFNRLADGTMEKLPKPSVDTGMGLERISAVIQHVNSNYDIDIFQKLIAKVAELTGEKDLTNKSLRVIADHIRSCAYLIVDGVIPSNEGRGYVLRRIIRRAVRHGHLLGAKDTFFYKLVPVLIDVMATAGKDVKAKQANVEKLLRLEEEQFARTLERGLALLDEALINVKDGVLSGEVAFKLYDTYGFPLDLTADVCRERNIRIDEEGFEREMEVQRLRAQAASRFGVDYNNVIRVEGTTTFEGYTEAETQAKVTALFYEGKSVESISAGQSAVVILDDTPFYAESGGQIGDRGCLIATNMRFDVKDTQKYGQVFGHIGTLIQGTLNVGQTINAVVDTEHRIKTSLNHSATHLLHAALRQVLGSHVAQKGSLVSDTILRFDFAQPEAISQEQLFEIECLVNQHIRANHLVVTEVMPIDEAKAKGAMALFGEKYGDVVRVVKMGEFSIELCGGIHVKRTGEIGLFKIVSGSAIAAGVRRVEAVTGEGAINWLQQQQVLLMQSADLLKSDANSLVEKIQQLQDKAKKTEKELQALKEKSAMKAGSDIAKSAVEINGVSVIVQQLENMDVKSLRVIVDDLKNQLGSAVIAFVTKNEDKVNLVVGVTTDLTSKVKAGELVNLMAQQVGGKGGGRPDMAMAGGSQPENISKALTVCNEWLHKNL.

Zn(2+)-binding residues include His-563, His-567, Cys-665, and His-669.

The protein belongs to the class-II aminoacyl-tRNA synthetase family. Zn(2+) serves as cofactor.

Its subcellular location is the cytoplasm. It carries out the reaction tRNA(Ala) + L-alanine + ATP = L-alanyl-tRNA(Ala) + AMP + diphosphate. In terms of biological role, catalyzes the attachment of alanine to tRNA(Ala) in a two-step reaction: alanine is first activated by ATP to form Ala-AMP and then transferred to the acceptor end of tRNA(Ala). Also edits incorrectly charged Ser-tRNA(Ala) and Gly-tRNA(Ala) via its editing domain. The chain is Alanine--tRNA ligase from Histophilus somni (strain 2336) (Haemophilus somnus).